We begin with the raw amino-acid sequence, 138 residues long: Acidic phospholipase A2 DsM-a2/DsM-a2' (138 aa).

Positions Met-1–Gly-16 are cleaved as a signal peptide. 7 disulfides stabilise this stretch: Cys-42-Cys-131, Cys-44-Cys-60, Cys-59-Cys-111, Cys-65-Cys-138, Cys-66-Cys-104, Cys-73-Cys-97, and Cys-91-Cys-102. Tyr-43, Gly-45, and Gly-47 together coordinate Ca(2+). His-63 is a catalytic residue. Asp-64 provides a ligand contact to Ca(2+). Asp-105 is a catalytic residue.

It belongs to the phospholipase A2 family. Group II subfamily. D49 sub-subfamily. Ca(2+) is required as a cofactor. In terms of tissue distribution, expressed by the venom gland.

It localises to the secreted. The enzyme catalyses a 1,2-diacyl-sn-glycero-3-phosphocholine + H2O = a 1-acyl-sn-glycero-3-phosphocholine + a fatty acid + H(+). Its function is as follows. Exhibits high hydrolytic activities and shows strong preference for the anionic micelles (dPPC with deoxycholate) to the zwitterionic micelles (dPPC with Triton X-100). PLA2 catalyzes the calcium-dependent hydrolysis of the 2-acyl groups in 3-sn-phosphoglycerides. The chain is Acidic phospholipase A2 DsM-a2/DsM-a2' from Daboia siamensis (Eastern Russel's viper).